Here is a 213-residue protein sequence, read N- to C-terminus: Gas vesicle protein F (213 aa).

It belongs to the gas vesicle GvpF/GvpL family. In terms of assembly, binds GvpA.

The protein resides in the gas vesicle. Its function is as follows. A minor component of the gas vesicle, may be involved in preventing GvpA aggregation during gas vesicle nucleation. Gas vesicles are hollow, gas filled proteinaceous nanostructures found in some microorganisms. They allow positioning of halobacteria at the optimal depth for growth in the poorly aerated, shallow brine pools of their habitat. Functionally, expression of a 9.5 kb mc-vac DNA fragment containing 2 divergently transcribed regions (gvpD-gvpE-gvpF-gvpG-gvpH-gvpI-gvpJ-gvpK-gvpL-gvpM and gvpA-gvpC-gvpN-gvpO) allows H.volcanii to produce gas vesicles. This chain is Gas vesicle protein F, found in Haloferax mediterranei (strain ATCC 33500 / DSM 1411 / JCM 8866 / NBRC 14739 / NCIMB 2177 / R-4) (Halobacterium mediterranei).